The sequence spans 124 residues: RNA polymerase-binding protein RbpA (124 aa).

Residues Cys-34, His-38, Cys-56, and Cys-59 each coordinate Zn(2+). The tract at residues 73–124 (EKKAKPARTHWDMLMERRTREELEEVLEERLAVLRSGAMNIAVHPRDSRKSA) is sufficient for interaction with HrdB (SigA).

It belongs to the RNA polymerase-binding protein RbpA family. As to quaternary structure, homodimer. Forms a complex with the RNAP, and a complex with RNAP plus principal sigma factor HrdB associated with promoter. Binds to free principal sigma factors HrdB and HrdA, probably via the sigma-2 domain, but not to 6 other sigma factors tested. Zn(2+) is required as a cofactor.

In terms of biological role, binds to RNA polymerase (RNAP), stimulating transcription from principal, but not alternative sigma factor promoters. Stimulates transcription from several principal sigma factor HrdB (SigA)-dependent promoters but not from a SigR-dependent promoter. Stimulation occurs in the presence of the transcription initiation inhibitor rifampicin (Rif). The sequence is that of RNA polymerase-binding protein RbpA from Streptomyces coelicolor (strain ATCC BAA-471 / A3(2) / M145).